The following is a 499-amino-acid chain: Putative protein phosphatase 2C 76 (499 aa).

Residues 1-34 (MRLGCSGRRRRLLRAALLRLVVLVLVAPPRRCAG) form the signal peptide. The disordered stretch occupies residues 67-101 (AGSGGEGDGDRRSSSSSPPPPPHPRGCHVAVDRGR). A PPM-type phosphatase domain is found at 92–457 (GCHVAVDRGR…DNVAAVIVPL (366 aa)). Residues Asp-138 and Gly-139 each coordinate Mn(2+). The interval 286–306 (KKTSVVSGKRRRKRNSNNRDD) is disordered. 2 residues coordinate Mn(2+): Asp-397 and Asp-448.

This sequence belongs to the PP2C family. Mg(2+) serves as cofactor. It depends on Mn(2+) as a cofactor.

The catalysed reaction is O-phospho-L-seryl-[protein] + H2O = L-seryl-[protein] + phosphate. The enzyme catalyses O-phospho-L-threonyl-[protein] + H2O = L-threonyl-[protein] + phosphate. The chain is Putative protein phosphatase 2C 76 from Oryza sativa subsp. japonica (Rice).